We begin with the raw amino-acid sequence, 446 residues long: uncharacterized protein (446 aa).

3 disordered regions span residues 198–233 (SIQK…ENYS), 309–337 (NEDN…DDSK), and 394–431 (SESV…FGNT). Positions 199–224 (IQKQIPKQTQEQTQKQTQEQTQESSQ) are enriched in low complexity. The span at 317–333 (DNEEDSDESDIESDSDL) shows a compositional bias: acidic residues. The segment covering 397–418 (VKSDSNESKSIKPESIKSESIK) has biased composition (basic and acidic residues).

This is an uncharacterized protein from Acanthamoeba polyphaga mimivirus (APMV).